Reading from the N-terminus, the 114-residue chain is MTQPAIGWRVGLGPSIIRGPLVGKSPWSVFMIYGRTSKKPGPSRTSFLVYKRKYSSRKAALGGTLSHKVCKPFGMGFCFFLYFSICRFFASKERENKVGCNDVRICTNFYLFSD.

It localises to the mitochondrion. This is an uncharacterized protein from Arabidopsis thaliana (Mouse-ear cress).